The primary structure comprises 147 residues: RxLR effector protein Avr3a (147 aa).

Positions 1-21 are cleaved as a signal peptide; the sequence is MRLAIMLSATAVAINFATCSA. Positions 44–59 match the RxLR-dEER motif; sequence RLLRKNEENEETSEER. Lysine 48 carries the N6-acetyllysine modification. The effector domain stretch occupies residues 77–147; that stretch reads ALTKRADAKK…YMMHLGLTGY (71 aa).

This sequence belongs to the RxLR effector family. In terms of assembly, forms homodimers via the RxLR-dEER motif. Interacts with host E3 ligase CMPG1. Interacts with host DRP2. In terms of processing, proteolytically cleaved. The cleavage site directly after the RxLR sequence and the high conservation among other effector proteins suggest that the RxLR motif might play a crucial role in the intracellular processing before secretion. Glycosylated. Post-translationally, N-acetylated at Lys-48 after cleavage.

The protein localises to the secreted. Its subcellular location is the host cytoplasm. It is found in the host endosome. Multifunctional effector that can suppress host BAK1/SERK3-mediated immunity through at least two different pathways. Manipulates plant immunity by targeting and stabilizing host E3 ligase CMPG1. Preventing the normal 26S proteasome-dependent degradation of potato CMPG1, and thus potentially of its protein substrates in the host cell, further abolishes host cell death during the biotrophic phase of infection. Also associates with the dynamin-related protein 2 (DRP2), a plant GTPase involved in immune receptor-mediated endocytosis. The Avr3A(KI) form is recognized by R3a which triggers R3a-mediated hypersensitivity and suppresses INF1-induced cell death. The sequence is that of RxLR effector protein Avr3a from Phytophthora infestans (Potato late blight agent).